The following is a 405-amino-acid chain: S-adenosylmethionine synthase (405 aa).

His22 is a binding site for ATP. Residue Asp24 coordinates Mg(2+). Glu50 serves as a coordination point for K(+). L-methionine is bound by residues Glu63 and Gln107. The flexible loop stretch occupies residues Gln107–Arg117. ATP contacts are provided by residues Asp184–Lys186, Arg250–Phe251, Asp259, Arg265–Lys266, Ala282, and Lys286. Asp259 contacts L-methionine. Lys290 contributes to the L-methionine binding site.

It belongs to the AdoMet synthase family. In terms of assembly, homotetramer; dimer of dimers. Requires Mg(2+) as cofactor. It depends on K(+) as a cofactor.

The protein resides in the cytoplasm. The catalysed reaction is L-methionine + ATP + H2O = S-adenosyl-L-methionine + phosphate + diphosphate. It functions in the pathway amino-acid biosynthesis; S-adenosyl-L-methionine biosynthesis; S-adenosyl-L-methionine from L-methionine: step 1/1. In terms of biological role, catalyzes the formation of S-adenosylmethionine (AdoMet) from methionine and ATP. The overall synthetic reaction is composed of two sequential steps, AdoMet formation and the subsequent tripolyphosphate hydrolysis which occurs prior to release of AdoMet from the enzyme. The chain is S-adenosylmethionine synthase from Roseiflexus sp. (strain RS-1).